The sequence spans 499 residues: Histidine ammonia-lyase (499 aa).

Residues 142 to 144 constitute a cross-link (5-imidazolinone (Ala-Gly)); the sequence is ASG. Serine 143 is subject to 2,3-didehydroalanine (Ser).

The protein belongs to the PAL/histidase family. Post-translationally, contains an active site 4-methylidene-imidazol-5-one (MIO), which is formed autocatalytically by cyclization and dehydration of residues Ala-Ser-Gly.

It localises to the cytoplasm. The enzyme catalyses L-histidine = trans-urocanate + NH4(+). It functions in the pathway amino-acid degradation; L-histidine degradation into L-glutamate; N-formimidoyl-L-glutamate from L-histidine: step 1/3. The protein is Histidine ammonia-lyase of Staphylococcus saprophyticus subsp. saprophyticus (strain ATCC 15305 / DSM 20229 / NCIMB 8711 / NCTC 7292 / S-41).